An 865-amino-acid polypeptide reads, in one-letter code: Leucine--tRNA ligase (865 aa).

The 'HIGH' region motif lies at 36–46 (PYPSGKIHMGH). Positions 608–612 (KMSKS) match the 'KMSKS' region motif. Lysine 611 is a binding site for ATP.

The protein belongs to the class-I aminoacyl-tRNA synthetase family.

It localises to the cytoplasm. It carries out the reaction tRNA(Leu) + L-leucine + ATP = L-leucyl-tRNA(Leu) + AMP + diphosphate. This chain is Leucine--tRNA ligase, found in Wolbachia sp. subsp. Brugia malayi (strain TRS).